The chain runs to 987 residues: Probable outer membrane protein PmpG (987 aa).

A signal peptide spans 1 to 25 (MMQTPFHKFFLLAMLSYSLLQGGHA). One can recognise an Autotransporter domain in the interval 707–987 (GRAYCRGIWI…GLSIGSKIRF (281 aa)).

It belongs to the PMP outer membrane protein family.

It localises to the secreted. The protein resides in the cell wall. It is found in the cell outer membrane. The sequence is that of Probable outer membrane protein PmpG (pmpG) from Chlamydia muridarum (strain MoPn / Nigg).